Reading from the N-terminus, the 237-residue chain is DNA repair protein RecO (237 aa).

Belongs to the RecO family.

Functionally, involved in DNA repair and RecF pathway recombination. The chain is DNA repair protein RecO from Rickettsia conorii (strain ATCC VR-613 / Malish 7).